The primary structure comprises 259 residues: Small ribosomal subunit protein eS1 (259 aa).

Ala-2 is modified (N-acetylalanine; partial).

The protein belongs to the eukaryotic ribosomal protein eS1 family. As to quaternary structure, component of the small ribosomal subunit. Mature ribosomes consist of a small (40S) and a large (60S) subunit. The 40S subunit contains about 33 different proteins and 1 molecule of RNA (18S). The 60S subunit contains about 49 different proteins and 3 molecules of RNA (25S, 5.8S and 5S).

The protein localises to the cytoplasm. This chain is Small ribosomal subunit protein eS1, found in Cryptococcus neoformans var. neoformans serotype D (strain B-3501A) (Filobasidiella neoformans).